The chain runs to 513 residues: ATP synthase subunit alpha (513 aa).

169–176 (GDRQTGKT) contributes to the ATP binding site.

Belongs to the ATPase alpha/beta chains family. F-type ATPases have 2 components, CF(1) - the catalytic core - and CF(0) - the membrane proton channel. CF(1) has five subunits: alpha(3), beta(3), gamma(1), delta(1), epsilon(1). CF(0) has three main subunits: a(1), b(2) and c(9-12). The alpha and beta chains form an alternating ring which encloses part of the gamma chain. CF(1) is attached to CF(0) by a central stalk formed by the gamma and epsilon chains, while a peripheral stalk is formed by the delta and b chains.

The protein localises to the cell inner membrane. It catalyses the reaction ATP + H2O + 4 H(+)(in) = ADP + phosphate + 5 H(+)(out). Its function is as follows. Produces ATP from ADP in the presence of a proton gradient across the membrane. The alpha chain is a regulatory subunit. In Salmonella paratyphi C (strain RKS4594), this protein is ATP synthase subunit alpha.